We begin with the raw amino-acid sequence, 154 residues long: NADPH-dependent 7-cyano-7-deazaguanine reductase (154 aa).

Positions 1–11 (MAKKPVKDLKQ) are enriched in basic and acidic residues. The tract at residues 1-31 (MAKKPVKDLKQLGHATPVPASPEEATLERVP) is disordered. Cys52 serves as the catalytic Thioimide intermediate. The active-site Proton donor is the Asp59. Substrate-binding positions include 74 to 76 (IES) and 93 to 94 (HE).

It belongs to the GTP cyclohydrolase I family. QueF type 1 subfamily.

Its subcellular location is the cytoplasm. It carries out the reaction 7-aminomethyl-7-carbaguanine + 2 NADP(+) = 7-cyano-7-deazaguanine + 2 NADPH + 3 H(+). It participates in tRNA modification; tRNA-queuosine biosynthesis. Its function is as follows. Catalyzes the NADPH-dependent reduction of 7-cyano-7-deazaguanine (preQ0) to 7-aminomethyl-7-deazaguanine (preQ1). This chain is NADPH-dependent 7-cyano-7-deazaguanine reductase, found in Parvibaculum lavamentivorans (strain DS-1 / DSM 13023 / NCIMB 13966).